The following is a 650-amino-acid chain: Aminopeptidase B (650 aa).

S7 carries the phosphoserine modification. Substrate is bound at residue 298–302; it reads GGMEN. Residue H325 participates in Zn(2+) binding. The active-site Proton acceptor is E326. Positions 329 and 348 each coordinate Zn(2+). K446 carries the post-translational modification N6-acetyllysine.

It belongs to the peptidase M1 family. As to quaternary structure, monomer. Zn(2+) is required as a cofactor. As to expression, widely expressed.

The protein localises to the secreted. It carries out the reaction Release of N-terminal Arg and Lys from oligopeptides when P1' is not Pro. Also acts on arylamides of Arg and Lys.. Functionally, exopeptidase which selectively removes arginine and/or lysine residues from the N-terminus of several peptide substrates including Arg(0)-Leu-enkephalin, Arg(0)-Met-enkephalin and Arg(-1)-Lys(0)-somatostatin-14. Can hydrolyze leukotriene A4 (LTA-4) into leukotriene B4 (LTB-4). This Rattus norvegicus (Rat) protein is Aminopeptidase B (Rnpep).